A 270-amino-acid polypeptide reads, in one-letter code: Formamidopyrimidine-DNA glycosylase (270 aa).

P2 functions as the Schiff-base intermediate with DNA in the catalytic mechanism. The active-site Proton donor is the E3. The active-site Proton donor; for beta-elimination activity is K57. Residues H90, R109, and K150 each coordinate DNA. Residues 235-269 (LVYGNKDKPCPRCGTKIKSIIIGQRNSFFCPQCQK) form an FPG-type zinc finger. R259 acts as the Proton donor; for delta-elimination activity in catalysis.

It belongs to the FPG family. In terms of assembly, monomer. Zn(2+) is required as a cofactor.

The catalysed reaction is Hydrolysis of DNA containing ring-opened 7-methylguanine residues, releasing 2,6-diamino-4-hydroxy-5-(N-methyl)formamidopyrimidine.. The enzyme catalyses 2'-deoxyribonucleotide-(2'-deoxyribose 5'-phosphate)-2'-deoxyribonucleotide-DNA = a 3'-end 2'-deoxyribonucleotide-(2,3-dehydro-2,3-deoxyribose 5'-phosphate)-DNA + a 5'-end 5'-phospho-2'-deoxyribonucleoside-DNA + H(+). In terms of biological role, involved in base excision repair of DNA damaged by oxidation or by mutagenic agents. Acts as a DNA glycosylase that recognizes and removes damaged bases. Has a preference for oxidized purines, such as 7,8-dihydro-8-oxoguanine (8-oxoG). Has AP (apurinic/apyrimidinic) lyase activity and introduces nicks in the DNA strand. Cleaves the DNA backbone by beta-delta elimination to generate a single-strand break at the site of the removed base with both 3'- and 5'-phosphates. This Histophilus somni (strain 2336) (Haemophilus somnus) protein is Formamidopyrimidine-DNA glycosylase.